Reading from the N-terminus, the 434-residue chain is Tol-Pal system protein TolB (434 aa).

A signal peptide spans 1–21; sequence MIVRRALALAALALAASPALA. A disordered region spans residues 411–434; that stretch reads GDRQTPVTSGKTDLAAPAWGPLAP.

It belongs to the TolB family. The Tol-Pal system is composed of five core proteins: the inner membrane proteins TolA, TolQ and TolR, the periplasmic protein TolB and the outer membrane protein Pal. They form a network linking the inner and outer membranes and the peptidoglycan layer.

The protein resides in the periplasm. Functionally, part of the Tol-Pal system, which plays a role in outer membrane invagination during cell division and is important for maintaining outer membrane integrity. In Anaeromyxobacter dehalogenans (strain 2CP-C), this protein is Tol-Pal system protein TolB.